A 541-amino-acid chain; its full sequence is Cytosolic phospholipase A2 gamma (541 aa).

In terms of domain architecture, PLA2c spans 1–541 (MGSSEVSIIP…KDSARSCCLA (541 aa)). The active-site Nucleophile is the S82. A required for lipid droplet localization region spans residues 260–292 (LTLKGLWRRAVANAKSIGHLIFARLLRLQESSQ). Position 337 is a phosphoserine (S337). The active-site Proton acceptor is D385. Cysteine methyl ester is present on C538. C538 carries the S-farnesyl cysteine lipid modification. A propeptide spans 539–541 (CLA) (removed in mature form).

In terms of assembly, (Microbial infection) Interacts with HCV non-structural protein 4B/NS4B; this interaction likely initiates the recruitment of replication complexes to lipid droplets. As to expression, highly expressed in heart and skeletal muscle.

It localises to the cell membrane. It is found in the endoplasmic reticulum membrane. The protein localises to the mitochondrion membrane. The protein resides in the lipid droplet. It catalyses the reaction a 1,2-diacyl-sn-glycero-3-phosphocholine + H2O = a 1-acyl-sn-glycero-3-phosphocholine + a fatty acid + H(+). The catalysed reaction is a 1-O-alkyl-2-acyl-sn-glycero-3-phosphocholine + H2O = a 1-O-alkyl-sn-glycero-3-phosphocholine + a fatty acid + H(+). It carries out the reaction 1,2-dihexadecanoyl-sn-glycero-3-phosphocholine + H2O = 1-hexadecanoyl-sn-glycero-3-phosphocholine + hexadecanoate + H(+). The enzyme catalyses 1-hexadecanoyl-2-(9Z-octadecenoyl)-sn-glycero-3-phosphocholine + H2O = 1-hexadecanoyl-sn-glycero-3-phosphocholine + (9Z)-octadecenoate + H(+). It catalyses the reaction 1-hexadecanoyl-2-(9Z,12Z-octadecadienoyl)-sn-glycero-3-phosphocholine + H2O = (9Z,12Z)-octadecadienoate + 1-hexadecanoyl-sn-glycero-3-phosphocholine + H(+). The catalysed reaction is 1-hexadecanoyl-2-(5Z,8Z,11Z,14Z-eicosatetraenoyl)-sn-glycero-3-phosphocholine + H2O = 1-hexadecanoyl-sn-glycero-3-phosphocholine + (5Z,8Z,11Z,14Z)-eicosatetraenoate + H(+). It carries out the reaction 1-O-hexadecyl-2-(5Z,8Z,11Z,14Z)-eicosatetraenoyl-sn-glycero-3-phosphocholine + H2O = 1-O-hexadecyl-sn-glycero-3-phosphocholine + (5Z,8Z,11Z,14Z)-eicosatetraenoate + H(+). The enzyme catalyses 1-hexadecanoyl-2-(5Z,8Z,11Z,14Z-eicosatetraenoyl)-sn-glycero-3-phosphocholine + H2O = 2-(5Z,8Z,11Z,14Z)-eicosatetraenoyl-sn-glycero-3-phosphocholine + hexadecanoate + H(+). It catalyses the reaction a 1-acyl-sn-glycero-3-phosphocholine + H2O = sn-glycerol 3-phosphocholine + a fatty acid + H(+). The catalysed reaction is 1-hexadecanoyl-sn-glycero-3-phosphocholine + H2O = sn-glycerol 3-phosphocholine + hexadecanoate + H(+). It carries out the reaction 2 1-hexadecanoyl-sn-glycero-3-phosphocholine = 1,2-dihexadecanoyl-sn-glycero-3-phosphocholine + sn-glycerol 3-phosphocholine. The enzyme catalyses 1-hexadecanoyl-sn-glycero-3-phosphoethanolamine + 1-hexadecanoyl-sn-glycero-3-phosphocholine = 1,2-dihexadecanoyl-sn-glycero-3-phosphoethanolamine + sn-glycerol 3-phosphocholine. It catalyses the reaction 1-hexadecanoyl-sn-glycero-3-phosphoethanolamine + 1-hexadecanoyl-sn-glycero-3-phosphocholine = sn-glycero-3-phosphoethanolamine + 1,2-dihexadecanoyl-sn-glycero-3-phosphocholine. The catalysed reaction is 2 1-hexadecanoyl-sn-glycero-3-phosphoethanolamine = 1,2-dihexadecanoyl-sn-glycero-3-phosphoethanolamine + sn-glycero-3-phosphoethanolamine. It carries out the reaction 1-O-hexadecyl-sn-glycero-3-phosphocholine + 1-hexadecanoyl-sn-glycero-3-phosphocholine = 1-O-hexadecyl-2-hexadecanoyl-sn-glycero-3-phosphocholine + sn-glycerol 3-phosphocholine. The enzyme catalyses a 1-O-(1Z-alkenyl)-sn-glycero-3-phosphoethanolamine + 1-hexadecanoyl-sn-glycero-3-phosphocholine = 1-O-(1Z)-alkenyl-2-hexadecanoyl-sn-glycero-3-phosphoethanolamine + sn-glycerol 3-phosphocholine. It catalyses the reaction 1-O-hexadecyl-sn-glycero-3-phosphocholine + 1-hexadecanoyl-sn-glycero-3-phosphoethanolamine = 1-O-hexadecyl-2-hexadecanoyl-sn-glycero-3-phosphocholine + sn-glycero-3-phosphoethanolamine. The catalysed reaction is 1-octadecanoyl-2-(5Z,8Z,11Z,14Z)-eicosatetraenoyl-sn-glycero-3-phosphoethanolamine + 1-hexadecanoyl-sn-glycero-3-phosphocholine = 1-octadecanoyl-sn-glycero-3-phosphoethanolamine + 1-hexadecanoyl-2-(5Z,8Z,11Z,14Z-eicosatetraenoyl)-sn-glycero-3-phosphocholine. It carries out the reaction 1-octadecanoyl-2-(5Z,8Z,11Z,14Z)-eicosatetraenoyl-sn-glycero-3-phosphoethanolamine + 1-O-hexadecyl-sn-glycero-3-phosphocholine = 1-octadecanoyl-sn-glycero-3-phosphoethanolamine + 1-O-hexadecyl-2-(5Z,8Z,11Z,14Z)-eicosatetraenoyl-sn-glycero-3-phosphocholine. The enzyme catalyses 1-hexadecanoyl-2-(9Z,12Z-octadecadienoyl)-sn-glycero-3-phosphocholine + a 1-O-(1Z-alkenyl)-sn-glycero-3-phosphoethanolamine = 1-O-(1Z-alkenyl)-2-(9Z,12Z-octadecadienoyl)-sn-glycero-3-phosphoethanolamine + 1-hexadecanoyl-sn-glycero-3-phosphocholine. It catalyses the reaction 1-hexadecanoyl-2-(5Z,8Z,11Z,14Z-eicosatetraenoyl)-sn-glycero-3-phosphocholine + a 1-O-(1Z-alkenyl)-sn-glycero-3-phosphoethanolamine = 1-O-(1Z)-alkenyl-2-(5Z,8Z,11Z,14Z)-eicosatetraenoyl-sn-glycero-3-phosphoethanolamine + 1-hexadecanoyl-sn-glycero-3-phosphocholine. With respect to regulation, not regulated by calcium, coenzyme A or ATP. Lysophospholipase activity is inhibited by palmitoyl-CoA. Lysophospholipase and O-acyltransferase activities are inhibited by methylarachidonoylfluorophosphonate. Lysophospholipase activity is inhibited by phosphatidate or lysophosphatidate. O-acyltransferase activity is up-regulated at low concentration (10-20 uM) of phosphatidate or lysophosphatidate, but inhibited at higher concentrations. Functionally, calcium-independent phospholipase, lysophospholipase and O-acyltransferase involved in phospholipid remodeling with implications in endoplasmic reticulum membrane homeostasis and lipid droplet biogenesis. Preferentially hydrolyzes the ester bond of the fatty acyl group attached at the sn-2 position of phospholipids with choline and ethanolamine head groups, producing lysophospholipids that are used in deacylation-reacylation cycles. Transfers the sn-1 fatty acyl from one lysophospholipid molecule to the sn-2 position of another lysophospholipid to form diacyl, alkylacyl and alkenylacyl glycerophospholipids. Cleaves ester bonds but not alkyl or alkenyl ether bonds at sn-1 position of lysophospholipids. Catalyzes sn-2 fatty acyl transfer from phospholipids to the sn-2 position of 1-O-alkyl or 1-O-alkenyl lysophospholipids with lower efficiency. In response to dietary fatty acids, may play a role in the formation of nascent lipid droplets from the endoplasmic reticulum likely by regulating the phospholipid composition of these organelles. (Microbial infection) May play a role in replication and assembly of human hepatitis C virus (HCV). In response to HCV infection, promotes remodeling of host endoplasmic reticulum membranes to form organelle-like structures called membranous web, where HCV replication occur. Can further mediate translocation of replication complexes to lipid droplets to enable virion assembly. In terms of biological role, (Microbial infection) May facilitate human T-lymphotropic virus type 1 (HTLV-1) infection by promoting leukotriene B4 (LTB4) biosynthesis. LTB4 acts as a chemoattractant for HTLV-1-infected CD4-positive T cells and favors cell to cell viral transmission. This chain is Cytosolic phospholipase A2 gamma (PLA2G4C), found in Homo sapiens (Human).